The following is a 106-amino-acid chain: Nucleoid-associated protein Nwi_0368 (106 aa).

Belongs to the YbaB/EbfC family. As to quaternary structure, homodimer.

Its subcellular location is the cytoplasm. The protein localises to the nucleoid. Binds to DNA and alters its conformation. May be involved in regulation of gene expression, nucleoid organization and DNA protection. This chain is Nucleoid-associated protein Nwi_0368, found in Nitrobacter winogradskyi (strain ATCC 25391 / DSM 10237 / CIP 104748 / NCIMB 11846 / Nb-255).